The primary structure comprises 653 residues: ATP-dependent zinc metalloprotease FtsH 1 (653 aa).

The Cytoplasmic segment spans residues 1–7 (MSRFFKS). A helical transmembrane segment spans residues 8–28 (AAFPILIVVVLAFFAQRLINP). Topologically, residues 29-105 (GDSGPRYDYS…FDIEGTKSNG (77 aa)) are extracellular. A helical transmembrane segment spans residues 106-126 (WLSLLTYVLPFLIFIGFWIFL). Topologically, residues 127 to 653 (MNQVQGGGSK…MHFPERPELA (527 aa)) are cytoplasmic. An ATP-binding site is contributed by 198 to 205 (GPPGTGKT). A Zn(2+)-binding site is contributed by His420. Glu421 is an active-site residue. 2 residues coordinate Zn(2+): His424 and Asp496. A disordered region spans residues 603-653 (EEVFGAEASPPPDVPLPPATERGRDTPRPLPRPGLAGGAAEMHFPERPELA). The span at 611-620 (SPPPDVPLPP) shows a compositional bias: pro residues.

It in the central section; belongs to the AAA ATPase family. This sequence in the C-terminal section; belongs to the peptidase M41 family. Homohexamer. Zn(2+) is required as a cofactor.

It is found in the cell membrane. Acts as a processive, ATP-dependent zinc metallopeptidase for both cytoplasmic and membrane proteins. Plays a role in the quality control of integral membrane proteins. The sequence is that of ATP-dependent zinc metalloprotease FtsH 1 from Conexibacter woesei (strain DSM 14684 / CCUG 47730 / CIP 108061 / JCM 11494 / NBRC 100937 / ID131577).